The primary structure comprises 413 residues: Phosphopentomutase (413 aa).

Residues aspartate 11, aspartate 306, histidine 311, aspartate 347, histidine 348, and histidine 359 each coordinate Mn(2+).

This sequence belongs to the phosphopentomutase family. It depends on Mn(2+) as a cofactor.

Its subcellular location is the cytoplasm. The catalysed reaction is 2-deoxy-alpha-D-ribose 1-phosphate = 2-deoxy-D-ribose 5-phosphate. It catalyses the reaction alpha-D-ribose 1-phosphate = D-ribose 5-phosphate. Its pathway is carbohydrate degradation; 2-deoxy-D-ribose 1-phosphate degradation; D-glyceraldehyde 3-phosphate and acetaldehyde from 2-deoxy-alpha-D-ribose 1-phosphate: step 1/2. Isomerase that catalyzes the conversion of deoxy-ribose 1-phosphate (dRib-1-P) and ribose 1-phosphate (Rib-1-P) to deoxy-ribose 5-phosphate (dRib-5-P) and ribose 5-phosphate (Rib-5-P), respectively. The chain is Phosphopentomutase from Helicobacter pylori (strain G27).